Here is a 492-residue protein sequence, read N- to C-terminus: FAD-containing monooxygenase EthA (492 aa).

FAD contacts are provided by residues serine 15, glutamate 36, 44–47 (TWDL), aspartate 56, and valine 104. Residue 54 to 56 (RSD) participates in NADP(+) binding. Residues 183–189 (SGATAVT) and 207–208 (RS) each bind NADP(+).

This sequence belongs to the FAD-binding monooxygenase family. FAD serves as cofactor.

It localises to the cell membrane. It carries out the reaction ethionamide + NADPH + O2 + H(+) = ethionamide S-oxide + NADP(+) + H2O. In terms of biological role, monooxygenase able to convert a wide range of ketones to the corresponding esters or lactones via a Baeyer-Villiger oxidation reaction. Can act on long-chain aliphatic ketones (2-hexanone to 2-dodecanone) and on aromatic ketones (phenylacetone and benzylacetone). Is also able to catalyze enantioselective sulfoxidation of methyl-p-tolylsulfide. In vivo, likely functions as a BVMO, but the exact nature of the physiological substrate(s) remains to be established. Its function is as follows. Is responsible for the activation of several thiocarbamide-containing pro-drugs, such as ethionamide (ETH), isoxyl (ISO) and thiacetazone (TAC), into reactive species. The chain is FAD-containing monooxygenase EthA (ethA) from Mycolicibacterium smegmatis (strain ATCC 700084 / mc(2)155) (Mycobacterium smegmatis).